Consider the following 130-residue polypeptide: Small ribosomal subunit protein uS11 (130 aa).

It belongs to the universal ribosomal protein uS11 family. In terms of assembly, part of the 30S ribosomal subunit.

Functionally, located on the platform of the 30S subunit. The sequence is that of Small ribosomal subunit protein uS11 from Ignicoccus hospitalis (strain KIN4/I / DSM 18386 / JCM 14125).